A 193-amino-acid polypeptide reads, in one-letter code: uncharacterized protein (193 aa).

The N-terminal stretch at 1–26 (MRNVFVGALCMCGMSFVFSDSVRSAA) is a signal peptide.

This is an uncharacterized protein from Treponema pallidum (strain Nichols).